Reading from the N-terminus, the 115-residue chain is MIVNESKNLSWEGEVRIADSFIKRALGLMFKKPRYALVFILPLETRINASIHGFFMLESIDVIFLDSNFRVVDVTTLKPWRIYIPKARARYIIEGPRGLKESIKPEFGDKIKWFT.

The protein belongs to the UPF0127 family.

This chain is UPF0127 protein PH1112, found in Pyrococcus horikoshii (strain ATCC 700860 / DSM 12428 / JCM 9974 / NBRC 100139 / OT-3).